Consider the following 91-residue polypeptide: Probable Thioredoxin (91 aa).

Residues 1–91 enclose the Glutaredoxin domain; it reads MVMMKLFTSP…LKGGEEYGAS (91 aa). C12 and C15 are disulfide-bonded.

The protein belongs to the glutaredoxin family.

Its subcellular location is the cytoplasm. Its function is as follows. Acts to maintain redox homeostasis; functions as a protein disulfide reductase. The polypeptide is Probable Thioredoxin (Archaeoglobus fulgidus (strain ATCC 49558 / DSM 4304 / JCM 9628 / NBRC 100126 / VC-16)).